The primary structure comprises 303 residues: Putative S-adenosyl-L-methionine-dependent methyltransferase Mb1931c (303 aa).

S-adenosyl-L-methionine is bound by residues D129 and 158–159 (DL).

Belongs to the UPF0677 family.

In terms of biological role, exhibits S-adenosyl-L-methionine-dependent methyltransferase activity. The sequence is that of Putative S-adenosyl-L-methionine-dependent methyltransferase Mb1931c from Mycobacterium bovis (strain ATCC BAA-935 / AF2122/97).